The primary structure comprises 244 residues: MNRDTIFSTPIEKLGDFTFDESVADVFPDMIQRSIPGYSNIITAIGMLAERFVTEGSNVYDLGCSRGASILAIRRNAPTKNFRIIGVDNSRPMVERCRSHLSAYHSDIPVNIVCDDIRNIEIQNASMVVLNFTLQFLPRTDRIALLTKIYHGLNPNGILILSEKFSFVDNTIDELLVDLHHTFKRANGYSELEVSQKRTALENVMLTDSIQTHKNRLQDAGFSQIELWFQCFNFGSMVAIKQSP.

Residues Y38, 63–65 (GCS), 88–89 (DN), 116–117 (DI), N131, and R198 contribute to the S-adenosyl-L-methionine site.

This sequence belongs to the class I-like SAM-binding methyltransferase superfamily. Cx-SAM synthase family. Homodimer.

The catalysed reaction is prephenate + S-adenosyl-L-methionine = carboxy-S-adenosyl-L-methionine + 3-phenylpyruvate + H2O. Its function is as follows. Catalyzes the conversion of S-adenosyl-L-methionine (SAM) to carboxy-S-adenosyl-L-methionine (Cx-SAM). The chain is Carboxy-S-adenosyl-L-methionine synthase from Haemophilus ducreyi (strain 35000HP / ATCC 700724).